A 326-amino-acid chain; its full sequence is Cytosolic Fe-S cluster assembly factor NBP35 (326 aa).

Positions 1 to 38 (MTEIANGQQILPPDYTLKEPEPEHCPGPESENAGKGDS) are disordered. A compositionally biased stretch (basic and acidic residues) spans 16–26 (TLKEPEPEHCP). Residues Cys-25, Cys-39, Cys-42, and Cys-48 each contribute to the [4Fe-4S] cluster site. 78-85 (GKGGVGKS) provides a ligand contact to ATP. Cys-251 and Cys-254 together coordinate [4Fe-4S] cluster.

It belongs to the Mrp/NBP35 ATP-binding proteins family. NUBP1/NBP35 subfamily. As to quaternary structure, heterotetramer of 2 NBP35 and 2 CFD1 chains. Requires [4Fe-4S] cluster as cofactor.

It localises to the cytoplasm. Its subcellular location is the nucleus. Component of the cytosolic iron-sulfur (Fe/S) protein assembly (CIA) machinery. Required for maturation of extramitochondrial Fe-S proteins. The NBP35-CFD1 heterotetramer forms a Fe-S scaffold complex, mediating the de novo assembly of an Fe-S cluster and its transfer to target apoproteins. Required for biogenesis and export of both ribosomal subunits, which may reflect a role in assembly of the Fe/S clusters in RLI1, a protein which performs rRNA processing and ribosome export. The sequence is that of Cytosolic Fe-S cluster assembly factor NBP35 from Kluyveromyces lactis (strain ATCC 8585 / CBS 2359 / DSM 70799 / NBRC 1267 / NRRL Y-1140 / WM37) (Yeast).